Consider the following 211-residue polypeptide: MKIAAFVVACLVATSAVSCAPTTRALTDDFDDFVGLLPLNDLLDLAMRYLLTDKEVQQTLLYLQGEEFSAVWDQFFELSAVRDLLQYLEEAGVPAYESLNVVADFLGLSPLKPTSVRSLSLAARTGGLNGLLEEALAMMPAAELEAMFEEKMKSSTEFKALFEKMQNFDHKQLRALYESSTEVQNMIHKLESLGVDVDHIVEVLKDFFGWN.

The N-terminal stretch at 1-19 (MKIAAFVVACLVATSAVSC) is a signal peptide.

This chain is Protein G12, found in Anopheles gambiae (African malaria mosquito).